A 187-amino-acid polypeptide reads, in one-letter code: Threonylcarbamoyl-AMP synthase (187 aa).

One can recognise a YrdC-like domain in the interval Gln3–Gly187.

This sequence belongs to the SUA5 family. TsaC subfamily.

Its subcellular location is the cytoplasm. The enzyme catalyses L-threonine + hydrogencarbonate + ATP = L-threonylcarbamoyladenylate + diphosphate + H2O. Its function is as follows. Required for the formation of a threonylcarbamoyl group on adenosine at position 37 (t(6)A37) in tRNAs that read codons beginning with adenine. Catalyzes the conversion of L-threonine, HCO(3)(-)/CO(2) and ATP to give threonylcarbamoyl-AMP (TC-AMP) as the acyladenylate intermediate, with the release of diphosphate. The polypeptide is Threonylcarbamoyl-AMP synthase (Shewanella pealeana (strain ATCC 700345 / ANG-SQ1)).